A 329-amino-acid chain; its full sequence is Holliday junction branch migration complex subunit RuvB (329 aa).

The segment at 1-20 (MSRILEGDPVEGEKSWENEL) is disordered. The interval 1–181 (MSRILEGDPV…FGIVERLQFY (181 aa)) is large ATPase domain (RuvB-L). Over residues 11–20 (EGEKSWENEL) the composition is skewed to basic and acidic residues. ATP contacts are provided by residues Leu20, Arg21, Gly62, Lys65, Thr66, Thr67, 128 to 130 (EDY), Arg171, Tyr181, and Arg218. Thr66 serves as a coordination point for Mg(2+). The interval 182–252 (DKDALRQILM…IAVYALNQLG (71 aa)) is small ATPAse domain (RuvB-S). Residues 255–329 (QYGLDLMDRR…FAKSSVLADK (75 aa)) are head domain (RuvB-H). DNA is bound by residues Arg291, Lys310, and Arg315.

Belongs to the RuvB family. Homohexamer. Forms an RuvA(8)-RuvB(12)-Holliday junction (HJ) complex. HJ DNA is sandwiched between 2 RuvA tetramers; dsDNA enters through RuvA and exits via RuvB. An RuvB hexamer assembles on each DNA strand where it exits the tetramer. Each RuvB hexamer is contacted by two RuvA subunits (via domain III) on 2 adjacent RuvB subunits; this complex drives branch migration. In the full resolvosome a probable DNA-RuvA(4)-RuvB(12)-RuvC(2) complex forms which resolves the HJ.

It localises to the cytoplasm. It catalyses the reaction ATP + H2O = ADP + phosphate + H(+). In terms of biological role, the RuvA-RuvB-RuvC complex processes Holliday junction (HJ) DNA during genetic recombination and DNA repair, while the RuvA-RuvB complex plays an important role in the rescue of blocked DNA replication forks via replication fork reversal (RFR). RuvA specifically binds to HJ cruciform DNA, conferring on it an open structure. The RuvB hexamer acts as an ATP-dependent pump, pulling dsDNA into and through the RuvAB complex. RuvB forms 2 homohexamers on either side of HJ DNA bound by 1 or 2 RuvA tetramers; 4 subunits per hexamer contact DNA at a time. Coordinated motions by a converter formed by DNA-disengaged RuvB subunits stimulates ATP hydrolysis and nucleotide exchange. Immobilization of the converter enables RuvB to convert the ATP-contained energy into a lever motion, pulling 2 nucleotides of DNA out of the RuvA tetramer per ATP hydrolyzed, thus driving DNA branch migration. The RuvB motors rotate together with the DNA substrate, which together with the progressing nucleotide cycle form the mechanistic basis for DNA recombination by continuous HJ branch migration. Branch migration allows RuvC to scan DNA until it finds its consensus sequence, where it cleaves and resolves cruciform DNA. In Bdellovibrio bacteriovorus (strain ATCC 15356 / DSM 50701 / NCIMB 9529 / HD100), this protein is Holliday junction branch migration complex subunit RuvB.